Reading from the N-terminus, the 183-residue chain is ADP-ribosylation factor-like protein 5 (183 aa).

GTP-binding positions include 27–34 (GLNAAGKT), 70–74 (DLGGQ), and 129–132 (NKQD).

It belongs to the small GTPase superfamily. Arf family.

In terms of biological role, may bind and exchange GTP and GDP. The protein is ADP-ribosylation factor-like protein 5 (arl5) of Dictyostelium discoideum (Social amoeba).